We begin with the raw amino-acid sequence, 530 residues long: Type 2 DNA topoisomerase 6 subunit B (530 aa).

Residues N42, D76, 97–98 (SK), 106–113 (GMYGLGVK), and K427 each bind ATP.

Belongs to the TOP6B family. In terms of assembly, homodimer. Heterotetramer of two Top6A and two Top6B chains.

The enzyme catalyses ATP-dependent breakage, passage and rejoining of double-stranded DNA.. Its function is as follows. Relaxes both positive and negative superturns and exhibits a strong decatenase activity. The sequence is that of Type 2 DNA topoisomerase 6 subunit B from Saccharolobus solfataricus (strain ATCC 35092 / DSM 1617 / JCM 11322 / P2) (Sulfolobus solfataricus).